A 315-amino-acid polypeptide reads, in one-letter code: Adenine deaminase (315 aa).

Residues His14, His16, and His194 each coordinate Zn(2+). Glu197 acts as the Proton donor in catalysis. A Zn(2+)-binding site is contributed by Asp275. Asp276 lines the substrate pocket.

It belongs to the metallo-dependent hydrolases superfamily. Adenosine and AMP deaminases family. Adenine deaminase type 2 subfamily. It depends on Zn(2+) as a cofactor.

The enzyme catalyses adenine + H2O + H(+) = hypoxanthine + NH4(+). In terms of biological role, catalyzes the hydrolytic deamination of adenine to hypoxanthine. Plays an important role in the purine salvage pathway and in nitrogen catabolism. This chain is Adenine deaminase, found in Pseudomonas putida (strain GB-1).